A 2752-amino-acid polypeptide reads, in one-letter code: Piezo-type mechanosensitive ion channel component 2 (2752 aa).

The Cytoplasmic portion of the chain corresponds to 1-12 (MASEVVCGLIFR). The helical transmembrane segment at 13–24 (LLLPICLAVACA) threads the bilayer. Over 25 to 30 (FRYNGL) the chain is Extracellular. The helical transmembrane segment at 31-43 (SFVYLIYLLLIPL) threads the bilayer. Over 44 to 50 (FSEPTKT) the chain is Cytoplasmic. The chain crosses the membrane as a helical span at residues 51 to 76 (TMQGHTGRLLKSLCFISLSFLLLHII). The Extracellular portion of the chain corresponds to 77–122 (FHITLVSLEAQHRIAPGYNCSTWEKTFRQIGFESLKGADAGNGIRV). A glycan (N-linked (GlcNAc...) asparagine) is linked at Asn-95. A helical membrane pass occupies residues 123–141 (FVPDIGMFIASLTIWLLCR). Topologically, residues 142-221 (NIVQKPVTDE…KEFIGNMITT (80 aa)) are cytoplasmic. A helical transmembrane segment spans residues 222–237 (AGKVVVTILLGSSGMM). At 238 to 240 (LPS) the chain is on the extracellular side. Residues 241–258 (LTSSVYFFVFLGLCTWWS) traverse the membrane as a helical segment. At 259 to 264 (WCRTFD) the chain is on the cytoplasmic side. A helical membrane pass occupies residues 265 to 287 (PLLFSCLCVLLAIFTAGHLIGLY). Topologically, residues 288–335 (LYQFQFFQEAVPPNDYYARLFGIKSVIQTDCSSTWKIIVNPDLSWYHH) are extracellular. The chain crosses the membrane as a helical span at residues 336–355 (ANPILLLVMYYTLATLIRIW). Topologically, residues 356-492 (LQEPLVQDEG…SIKVHAMVSV (137 aa)) are cytoplasmic. The tract at residues 446–478 (STPQYRWEPSDESSEKREEEEEEKEEFEEERSR) is disordered. A compositionally biased stretch (acidic residues) spans 463 to 474 (EEEEEEKEEFEE). A helical transmembrane segment spans residues 493-514 (FQFIMKQSYICALIAMMAWSIT). At 515–519 (YHSWL) the chain is on the extracellular side. Residues 520 to 531 (TFVLLIWSCTLW) form a helical membrane-spanning segment. The Cytoplasmic portion of the chain corresponds to 532–535 (MIRN). Residues 536 to 562 (RRKYAMISSPFMVVYGNLLLILQYIWS) form a helical membrane-spanning segment. The Extracellular segment spans residues 563–583 (FELPEIKKVPGFLEKKEPGEL). The helical transmembrane segment at 584–614 (ASKILFTITFWLLLRQHLTEQKALQEKEALL) threads the bilayer. The Cytoplasmic segment spans residues 615-685 (SEVKIGSQEN…GNLVVAMFIK (71 aa)). The segment covering 623–632 (ENEEKDEELQ) has biased composition (acidic residues). The disordered stretch occupies residues 623 to 664 (ENEEKDEELQDIQVEGEPKEEEEEEAKEEKQERKKVEQEEAE). Basic and acidic residues predominate over residues 649–660 (KEEKQERKKVEQ). A helical transmembrane segment spans residues 686-699 (YWIYVCGGMFFFVS). Over 700–705 (FEGKIV) the chain is Extracellular. The chain crosses the membrane as a helical span at residues 706-724 (MYKIIYMVLFLFCVALYQV). At 725-733 (HYEWWRKIL) the chain is on the cytoplasmic side. The chain crosses the membrane as a helical span at residues 734–753 (KYFWMSVVIYTMLVLIFIYT). The Extracellular portion of the chain corresponds to 754–785 (YQFENFPGLWQNMTGLKKEKLEDLGLKQFTVA). Residues 786-807 (ELFTRIFIPTSFLLVCILHLHY) form a helical membrane-spanning segment. Over 808–940 (FHDRFLELTD…QVFMWWILEL (133 aa)) the chain is Cytoplasmic. The residue at position 838 (Ser-838) is a Phosphoserine. Over residues 862-883 (PGEEKLEGYSEKAQKGDLGKDS) the composition is skewed to basic and acidic residues. Residues 862 to 902 (PGEEKLEGYSEKAQKGDLGKDSEESEEDGEEEEESEEEEET) are disordered. A compositionally biased stretch (acidic residues) spans 884–902 (EESEEDGEEEEESEEEEET). A helical transmembrane segment spans residues 941-956 (HIIKIVSSYIIWVSVK). Topologically, residues 957–962 (EVSLFN) are extracellular. A helical membrane pass occupies residues 963–972 (YVFLISWAFA). Over 973-980 (LPYAKLRR) the chain is Cytoplasmic. The helical transmembrane segment at 981–1001 (LASSVCTVWTCVIIVCKMLYQ) threads the bilayer. The Extracellular segment spans residues 1002-1057 (LQTIKPENFSVNCSLPNENQTNIPFNELNKSLLYSAPIDPTEWVGLRKSSPLLVYL). N-linked (GlcNAc...) asparagine glycosylation is present at Asn-1013. Cys-1014 and Cys-1192 are oxidised to a cystine. A helical membrane pass occupies residues 1058–1082 (RNNLLMLAILAFEVTIYRHQEYYRG). At 1083–1123 (RNNLTAPVSRTIFHDITRLHLDDGLINCAKYFINYFFYKFG) the chain is on the cytoplasmic side. A helical transmembrane segment spans residues 1124–1138 (LETCFLMSVNVIGQR). The Extracellular portion of the chain corresponds to 1139–1140 (MD). The chain crosses the membrane as a helical span at residues 1141-1154 (FYAMIHACWLIAVL). Topologically, residues 1155–1165 (YRRRRKAIAEI) are cytoplasmic. A helical membrane pass occupies residues 1166-1185 (WPKYCCFLACIITFQYFICI). Residues 1186-1222 (GIPPAPCRDYPWRFKGASFNDNIIKWLYFPDFIVRPN) are Extracellular-facing. The helical transmembrane segment at 1223–1243 (PVFLVYDFMLLLCASLQRQIF) threads the bilayer. Residues 1244 to 1297 (EDENKAAVRIMAGDNVEICMNLDAASFSQHNPVPDFIHCRSYLDMSKVIIFSYL) are Cytoplasmic-facing. The helical transmembrane segment at 1298–1310 (FWFVLTIIFITGT) threads the bilayer. Topologically, residues 1311-1316 (TRISIF) are extracellular. A helical transmembrane segment spans residues 1317–1329 (CMGYLVACFYFLL). The Cytoplasmic portion of the chain corresponds to 1330–1338 (FGGDLLLKP). The helical transmembrane segment at 1339–1364 (IKSILRYWDWLIAYNVFVITMKNILS) threads the bilayer. The Extracellular segment spans residues 1365 to 1413 (IGACGYIGTLVHNSCWLIQAFSLACTVKGYQMPAANSPCTLPSGEAGII). A helical membrane pass occupies residues 1414–1430 (WDSICFAFLLLQRRVFM). At 1431–1921 (SYYFLHVVAD…YAMYNTLVAR (491 aa)) the chain is on the cytoplasmic side. A coiled-coil region spans residues 1458–1529 (TIVKAVKARI…EREADKQKAK (72 aa)). 3 disordered regions span residues 1488-1534 (QQKY…KKKQ), 1593-1636 (ALRQ…KKSD), and 1844-1868 (SQDD…KLGS). The span at 1594–1615 (LRQRHKEKKRSAREERKRRRKG) shows a compositional bias: basic residues. A helical membrane pass occupies residues 1922–1936 (SEMVCYFVIILNHMV). At 1937–1943 (SASMITL) the chain is on the extracellular side. Residues 1944–1955 (LLPILIFLWAML) traverse the membrane as a helical segment. Residues 1956–1961 (SVPRPS) lie on the Cytoplasmic side of the membrane. The helical transmembrane segment at 1962 to 1983 (RRFWMMAIVYTEVAIVVKYFFQ) threads the bilayer. At 1984–2016 (FGFFPWNKNVEVNKDKPYHPPNIIGVEKKEGYV) the chain is on the extracellular side. Residues 2017–2035 (LYDLIQLLALFFHRSILKC) traverse the membrane as a helical segment. Topologically, residues 2036-2189 (HGLWDEDDMT…HPEYSAVTDV (154 aa)) are cytoplasmic. Disordered regions lie at residues 2047-2069 (SGMA…DSSD) and 2090-2135 (QQTA…SVLS). Over residues 2100-2127 (GSSSEPSQRSSFSSNRSQRGSTSTRNSS) the composition is skewed to low complexity. Residues 2190 to 2209 (YVLMFLADTVDFIIIVFGFW) traverse the membrane as a helical segment. Residues 2210–2231 (AFGKHSAAADITSSLSEDQVPG) are Extracellular-facing. Residues 2232–2252 (PFLVMVLIQFGTMVVDRALYL) traverse the membrane as a helical segment. Topologically, residues 2253–2256 (RKTV) are cytoplasmic. A helical membrane pass occupies residues 2257 to 2280 (LGKVIFQVILVFGIHFWMFFILPG). Residues 2281-2289 (VTERKFSQN) lie on the Extracellular side of the membrane. The chain crosses the membrane as a helical span at residues 2290–2312 (LVAQLWYFVKCVYFGLSAYQIRC). Over 2313–2397 (GYPTRVLGNF…YPQPRGQKKK (85 aa)) the chain is Cytoplasmic. The helical transmembrane segment at 2398 to 2421 (KVVKYGMGGMIIVLLICIVWFPLL) threads the bilayer. Residues 2422 to 2669 (FMSLIKSVAG…PSLGFLAGYG (248 aa)) are Extracellular-facing. The helical transmembrane segment at 2670 to 2690 (IMGLYASVVLVIGKFVREFFS) threads the bilayer. The Cytoplasmic segment spans residues 2691–2752 (GISHSIMFEE…MIKWTREKTN (62 aa)).

Belongs to the PIEZO (TC 1.A.75) family. Homotrimer; the homotrimer forms a propeller-shaped Piezo channel with a cation-ion conducting pore. Heterotrimeric interaction may occur between PIEZO1 and PIEZO2. Interacts with STOML3. Interacts with TMC7; the interaction inhibits PIEZO2-conducted mechanically activated currents. Interacts with TMC1; the interaction may be part of the MET complex. Interacts with MDFIC (via C-terminus); the interaction prolongs Piezo channel inactivation. Interacts with MDFI (via C-terminus); the interaction prolongs Piezo channel inactivation.

Its subcellular location is the cell membrane. It catalyses the reaction Ca(2+)(in) = Ca(2+)(out). Its activity is regulated as follows. Regulated by auxillary subunits MDFIC and MDFI. Channel activity is inhibited by TMEM120A. Phosphatidic acid and lysophosphatidic acid inhibit PIEZO2 channel activity. In terms of biological role, pore-forming subunit of the mechanosensitive non-specific cation Piezo channel required for rapidly adapting mechanically activated (MA) currents and has a key role in sensing touch and tactile pain. Piezo channels are homotrimeric three-blade propeller-shaped structures that utilize a cap-motion and plug-and-latch mechanism to gate their ion-conducting pathways. Expressed in sensory neurons, is essential for diverse physiological processes, including respiratory control, systemic metabolism, urinary function, and proprioception. Mediates airway stretch sensing, enabling efficient respiration at birth and maintaining normal breathing in adults. It regulates brown and beige adipose tissue morphology and function, preventing systemic hypermetabolism. In the lower urinary tract, acts as a sensor in both the bladder urothelium and innervating sensory neurons being required for bladder-stretch sensing and urethral micturition reflexes, ensuring proper urinary function. Additionally, PIEZO2 serves as the principal mechanotransducer in proprioceptors, facilitating proprioception and coordinated body movements. In inner ear hair cells, PIEZO1/2 subunits may constitute part of the mechanotransducer (MET) non-selective cation channel complex where they may act as pore-forming ion-conducting component in the complex. Required for Merkel-cell mechanotransduction. Plays a major role in light-touch mechanosensation. In Homo sapiens (Human), this protein is Piezo-type mechanosensitive ion channel component 2.